Here is an 873-residue protein sequence, read N- to C-terminus: DNA mismatch repair protein MutS (873 aa).

An ATP-binding site is contributed by 625-632 (GPNMGGKS).

Belongs to the DNA mismatch repair MutS family.

In terms of biological role, this protein is involved in the repair of mismatches in DNA. It is possible that it carries out the mismatch recognition step. This protein has a weak ATPase activity. This chain is DNA mismatch repair protein MutS, found in Xanthomonas oryzae pv. oryzae (strain KACC10331 / KXO85).